The primary structure comprises 307 residues: Aquaporin Lacbi1:387054 (307 aa).

Over 1–40 (MSNAPLVHLSDLQKRLRVFAVWEKVRNDGKVHWAIECFAE) the chain is Cytoplasmic. A helical transmembrane segment spans residues 41–61 (MFGVFLYVYFGLGSTAGWVIG). The Extracellular portion of the chain corresponds to 62-68 (NIIKETN). A helical transmembrane segment spans residues 69 to 89 (LSSILQIGLAYAFGIWFAIGL). Residues 90–120 (CSSSSGGHFNPCVTLSFVVFKGFPKLKACRY) lie on the Cytoplasmic side of the membrane. Positions 99–101 (NPC) match the NPA 1 motif. The chain crosses the membrane as a helical span at residues 121-141 (IIAQILGAYIASALVYSQWNV). Over 142–157 (LIEECTLGLIKAKAYD) the chain is Extracellular. Residues 158-178 (TTMFTPNGPAGIFALYLVPGA) traverse the membrane as a helical segment. The short motif at 167 to 169 (AGI) is the NPA 2 element. Topologically, residues 179-183 (QSVPR) are cytoplasmic. Residues 184-203 (ALLNEFVNSTLIGMIIWAAL) form a helical membrane-spanning segment. The Extracellular segment spans residues 204–216 (DPTNMMVPPAMGP). The chain crosses the membrane as a helical span at residues 217–237 (LFISLAYAAVIWGFATPAVAL). Residues 238–264 (NTARDLGARLFAMSIWGTKAAGSGYSA) are Cytoplasmic-facing. The helical transmembrane segment at 265 to 285 (IACLINIPATLLGVFLYEVFF) threads the bilayer. Residues 286–307 (TDSDRGKLLPILNGKKLKHIFS) lie on the Extracellular side of the membrane.

It belongs to the MIP/aquaporin (TC 1.A.8) family.

The protein resides in the membrane. It catalyses the reaction H2O(in) = H2O(out). The enzyme catalyses NH4(+)(in) = NH4(+)(out). The catalysed reaction is urea(in) = urea(out). It carries out the reaction glycerol(in) = glycerol(out). Functionally, water channel required to facilitate the transport of water across membranes. In addition to water, also shows strong ammonium transport activity. Also enables low but statistically significant glycerol and urea permeability. May be involved in fungal nitrogen (ammonium) support of the plant host in symbiosis. This is Aquaporin Lacbi1:387054 from Laccaria bicolor (strain S238N-H82 / ATCC MYA-4686) (Bicoloured deceiver).